We begin with the raw amino-acid sequence, 298 residues long: N-acetylmuramic acid 6-phosphate etherase (298 aa).

Residues 55 to 218 (IHAQVSGGGR…STGLMIKSGK (164 aa)) enclose the SIS domain. Residue Glu-83 is the Proton donor of the active site. The active site involves Glu-114.

Belongs to the GCKR-like family. MurNAc-6-P etherase subfamily. As to quaternary structure, homodimer.

The catalysed reaction is N-acetyl-D-muramate 6-phosphate + H2O = N-acetyl-D-glucosamine 6-phosphate + (R)-lactate. It functions in the pathway amino-sugar metabolism; 1,6-anhydro-N-acetylmuramate degradation. The protein operates within amino-sugar metabolism; N-acetylmuramate degradation. Its pathway is cell wall biogenesis; peptidoglycan recycling. In terms of biological role, specifically catalyzes the cleavage of the D-lactyl ether substituent of MurNAc 6-phosphate, producing GlcNAc 6-phosphate and D-lactate. Together with AnmK, is also required for the utilization of anhydro-N-acetylmuramic acid (anhMurNAc) either imported from the medium or derived from its own cell wall murein, and thus plays a role in cell wall recycling. This chain is N-acetylmuramic acid 6-phosphate etherase, found in Escherichia coli O7:K1 (strain IAI39 / ExPEC).